Consider the following 322-residue polypeptide: Acetyl-coenzyme A carboxylase carboxyl transferase subunit alpha (322 aa).

One can recognise a CoA carboxyltransferase C-terminal domain in the interval alanine 30 to lysine 293.

Belongs to the AccA family. In terms of assembly, acetyl-CoA carboxylase is a heterohexamer composed of biotin carboxyl carrier protein (AccB), biotin carboxylase (AccC) and two subunits each of ACCase subunit alpha (AccA) and ACCase subunit beta (AccD).

Its subcellular location is the cytoplasm. The catalysed reaction is N(6)-carboxybiotinyl-L-lysyl-[protein] + acetyl-CoA = N(6)-biotinyl-L-lysyl-[protein] + malonyl-CoA. It functions in the pathway lipid metabolism; malonyl-CoA biosynthesis; malonyl-CoA from acetyl-CoA: step 1/1. Its function is as follows. Component of the acetyl coenzyme A carboxylase (ACC) complex. First, biotin carboxylase catalyzes the carboxylation of biotin on its carrier protein (BCCP) and then the CO(2) group is transferred by the carboxyltransferase to acetyl-CoA to form malonyl-CoA. This chain is Acetyl-coenzyme A carboxylase carboxyl transferase subunit alpha, found in Nitrosomonas europaea (strain ATCC 19718 / CIP 103999 / KCTC 2705 / NBRC 14298).